The primary structure comprises 710 residues: MSAQGDCEFLVQRARELVPQDLWAAKAWLITARSLYPADFNIQYEMYTIERNAERTATAGRLLYDMFVNFPDQPVVWREISIITSALRNDSQDKQTQFLRSLFETLPGRVQCEMLLKVTEQCFNTLERSEMLLLLLRRFPETVVQHGVGLGEALLEAETIEEQESPVNCFRKLFVCDVLPLIINNHDVRLPANLLYKYLNKAAEFYINYVTRSTQIENQHQGAQDTSDLMSPSKRSSQKYIIEGLTEKSSQIVDPWERLFKILNVVGMRCEWQMDKGRRSYGDILHRMKDLCRYMNNFDSEAHAKYKNQVVYSTMLVFFKNAFQYVNSIQPSLFQGPNAPSQVPLVLLEDVSNVYGDVEIDRNKHIHKKRKLAEGREKTMSSDDEDCSAKGRNRHIVVNKAELANSTEVLESFKLARESWELLYSLEFLDKEFTRICLAWKTDTWLWLRIFLTDMIIYQGQYKKAIASLHHLAALQGSISQPQITGQGTLEHQRALIQLATCHFALGEYRMTCEKVLDLMCYMVLPIQDGGKSQEEPSKVKPKFRKGSDLKLLPCTSKAIMPYCLHLMLACFKLRAFTDNRDDMALGHVIVLLQQEWPRGENLFLKAVNKICQQGNFQYENFFNYVTNIDMLEEFAYLRTQEGGKIHLELLPNQGMLIKHHTVTRGITKGVKEDFRLAMERQVSRCGENLMVVLHRFCINEKILLLQTLT.

Residues Ser-231, Ser-381, and Ser-382 each carry the phosphoserine modification. A Glycyl lysine isopeptide (Lys-Gly) (interchain with G-Cter in SUMO2) cross-link involves residue Lys-464.

The protein belongs to the Integrator subunit 10 family. As to quaternary structure, component of the Integrator complex, composed of core subunits INTS1, INTS2, INTS3, INTS4, INTS5, INTS6, INTS7, INTS8, INTS9/RC74, INTS10, INTS11/CPSF3L, INTS12, INTS13, INTS14 and INTS15. The core complex associates with protein phosphatase 2A subunits PPP2CA and PPP2R1A, to form the Integrator-PP2A (INTAC) complex. INTS10 is part of the tail subcomplex, composed of INTS10, INTS13, INTS14 and INTS15.

The protein localises to the nucleus. Functionally, component of the integrator complex, a multiprotein complex that terminates RNA polymerase II (Pol II) transcription in the promoter-proximal region of genes. The integrator complex provides a quality checkpoint during transcription elongation by driving premature transcription termination of transcripts that are unfavorably configured for transcriptional elongation: the complex terminates transcription by (1) catalyzing dephosphorylation of the C-terminal domain (CTD) of Pol II subunit POLR2A/RPB1 and SUPT5H/SPT5, (2) degrading the exiting nascent RNA transcript via endonuclease activity and (3) promoting the release of Pol II from bound DNA. The integrator complex is also involved in terminating the synthesis of non-coding Pol II transcripts, such as enhancer RNAs (eRNAs), small nuclear RNAs (snRNAs), telomerase RNAs and long non-coding RNAs (lncRNAs). Within the integrator complex, INTS10 is part of the integrator tail module that acts as a platform for the recruitment of transcription factors at promoters. May be not involved in the recruitment of cytoplasmic dynein to the nuclear envelope, probably as component of the integrator complex. In Homo sapiens (Human), this protein is Integrator complex subunit 10.